The chain runs to 427 residues: Serine--tRNA ligase (427 aa).

231 to 233 is an L-serine binding site; the sequence is TAE. 262–264 lines the ATP pocket; it reads RSE. E285 is a binding site for L-serine. 349 to 352 serves as a coordination point for ATP; it reads EISS. Position 385 (S385) interacts with L-serine.

It belongs to the class-II aminoacyl-tRNA synthetase family. Type-1 seryl-tRNA synthetase subfamily. Homodimer. The tRNA molecule binds across the dimer.

The protein resides in the cytoplasm. It catalyses the reaction tRNA(Ser) + L-serine + ATP = L-seryl-tRNA(Ser) + AMP + diphosphate + H(+). The catalysed reaction is tRNA(Sec) + L-serine + ATP = L-seryl-tRNA(Sec) + AMP + diphosphate + H(+). Its pathway is aminoacyl-tRNA biosynthesis; selenocysteinyl-tRNA(Sec) biosynthesis; L-seryl-tRNA(Sec) from L-serine and tRNA(Sec): step 1/1. Functionally, catalyzes the attachment of serine to tRNA(Ser). Is also able to aminoacylate tRNA(Sec) with serine, to form the misacylated tRNA L-seryl-tRNA(Sec), which will be further converted into selenocysteinyl-tRNA(Sec). This chain is Serine--tRNA ligase, found in Listeria monocytogenes serotype 4b (strain CLIP80459).